The sequence spans 371 residues: Beta sliding clamp (371 aa).

It belongs to the beta sliding clamp family. Forms a ring-shaped head-to-tail homodimer around DNA which binds and tethers DNA polymerases and other proteins to the DNA. The DNA replisome complex has a single clamp-loading complex (3 tau and 1 each of delta, delta', psi and chi subunits) which binds 3 Pol III cores (1 core on the leading strand and 2 on the lagging strand) each with a beta sliding clamp dimer. Additional proteins in the replisome are other copies of gamma, psi and chi, Ssb, DNA helicase and RNA primase.

The protein resides in the cytoplasm. Its function is as follows. Confers DNA tethering and processivity to DNA polymerases and other proteins. Acts as a clamp, forming a ring around DNA (a reaction catalyzed by the clamp-loading complex) which diffuses in an ATP-independent manner freely and bidirectionally along dsDNA. Initially characterized for its ability to contact the catalytic subunit of DNA polymerase III (Pol III), a complex, multichain enzyme responsible for most of the replicative synthesis in bacteria; Pol III exhibits 3'-5' exonuclease proofreading activity. The beta chain is required for initiation of replication as well as for processivity of DNA replication. The polypeptide is Beta sliding clamp (dnaN) (Treponema pallidum (strain Nichols)).